Reading from the N-terminus, the 560-residue chain is NAD(P)H-quinone oxidoreductase chain 4-3 (560 aa).

14 consecutive transmembrane segments (helical) span residues 5–25 (FPWLTAIILLPLVASAFIPLL), 35–55 (WYALGVGIADFVLMCYTFWHH), 86–106 (ISMPLVLLAGFVTTLSMLAAW), 114–134 (LFYFLMLVLYSAQIGVFVAQD), 135–155 (LLLFFIMWELELVPVYLLVSI), 168–188 (FLLYTAAASIFILIAGLAMAL), 208–228 (ALELLLYAGLLIAFGVKLAIF), 242–262 (SAPVSMILAGVLLKMGGYGLI), 273–293 (HIYFAPVLATLGVINIIYGGL), 310–330 (VSHMGFVLLGIASFTDVGVSG), 331–351 (AMLQMLSHGLIAAVLFFLAGV), 374–394 (VFALFTAGTMASLALPGMSGF), 417–437 (VMVFLAAVGVILTPIYLLSML), and 488–508 (VFIAVSFLVLIIGVGVYPKIA).

It belongs to the complex I subunit 4 family.

The protein localises to the cellular thylakoid membrane. It carries out the reaction a plastoquinone + NADH + (n+1) H(+)(in) = a plastoquinol + NAD(+) + n H(+)(out). The enzyme catalyses a plastoquinone + NADPH + (n+1) H(+)(in) = a plastoquinol + NADP(+) + n H(+)(out). Its function is as follows. NDH-1 shuttles electrons from NAD(P)H, via FMN and iron-sulfur (Fe-S) centers, to quinones in the respiratory chain. The immediate electron acceptor for the enzyme in this species is believed to be plastoquinone. Couples the redox reaction to proton translocation (for every two electrons transferred, four hydrogen ions are translocated across the cytoplasmic membrane), and thus conserves the redox energy in a proton gradient. This chain is NAD(P)H-quinone oxidoreductase chain 4-3 (ndhD3), found in Nostoc sp. (strain PCC 7120 / SAG 25.82 / UTEX 2576).